A 92-amino-acid chain; its full sequence is Probable Fe(2+)-trafficking protein (92 aa).

This sequence belongs to the Fe(2+)-trafficking protein family.

In terms of biological role, could be a mediator in iron transactions between iron acquisition and iron-requiring processes, such as synthesis and/or repair of Fe-S clusters in biosynthetic enzymes. This chain is Probable Fe(2+)-trafficking protein, found in Shewanella woodyi (strain ATCC 51908 / MS32).